The sequence spans 575 residues: Intermediate filament protein ifa-1 (575 aa).

Disordered regions lie at residues M1–V30 and S45–E72. Positions M1–E72 are head. Over residues E7 to S17 the composition is skewed to polar residues. A compositionally biased stretch (basic and acidic residues) spans R63–E72. The IF rod domain maps to E69 to A422. The interval M73–L104 is coil 1A. Positions R105–M118 are linker 1. The coil 1B stretch occupies residues Y119 to L256. The segment at Q257–N274 is linker 12. The interval E275–A422 is coil 2. The interval G423–Q572 is tail. The region spanning S455–Q572 is the LTD domain.

This sequence belongs to the intermediate filament family. As to quaternary structure, forms some heteromeric filaments with ifb-1. As to expression, isoform d is abundantly expressed in the marginal cells of the pharynx, forming apicobasally oriented thick filament bundles that are attached to the apical and basal plasma membrane by hemi-adherens junctions. Expression of isoform c is also seen in the excretory cells and in the uterus. Isoform c is detectable in the amphid sensory neurins and the pharyngeal-intestinal valve. Both isoform c and isoform d are expressed in the rectum and vulva and in some neurons of the tail. In larvae, expression is seen in the excretory cell, the vulva, the rectum and in the thick filament bundles of the pharynx. Expression in pharynx begins in late embryos.

Its subcellular location is the cytoplasm. Functionally, cytoplasmic intermediate filaments make up the structural component of the cytoskeleton providing mechanical strength to cells. Essential protein required during embryogenesis especially for survival past the L1 larva stage, involved in intestine morphogenesis. The chain is Intermediate filament protein ifa-1 (ifa-1) from Caenorhabditis elegans.